A 150-amino-acid polypeptide reads, in one-letter code: Large ribosomal subunit protein bL9 (150 aa).

Belongs to the bacterial ribosomal protein bL9 family.

Functionally, binds to the 23S rRNA. This chain is Large ribosomal subunit protein bL9, found in Thioalkalivibrio sulfidiphilus (strain HL-EbGR7).